The primary structure comprises 237 residues: Ribonuclease PH (237 aa).

Phosphate contacts are provided by residues Arg-86 and 124–126; that span reads GTR.

The protein belongs to the RNase PH family. In terms of assembly, homohexameric ring arranged as a trimer of dimers.

The catalysed reaction is tRNA(n+1) + phosphate = tRNA(n) + a ribonucleoside 5'-diphosphate. Phosphorolytic 3'-5' exoribonuclease that plays an important role in tRNA 3'-end maturation. Removes nucleotide residues following the 3'-CCA terminus of tRNAs; can also add nucleotides to the ends of RNA molecules by using nucleoside diphosphates as substrates, but this may not be physiologically important. Probably plays a role in initiation of 16S rRNA degradation (leading to ribosome degradation) during starvation. This chain is Ribonuclease PH, found in Methylobacterium nodulans (strain LMG 21967 / CNCM I-2342 / ORS 2060).